Here is a 195-residue protein sequence, read N- to C-terminus: dTTP/UTP pyrophosphatase (195 aa).

Residue Asp-77 is the Proton acceptor of the active site.

It belongs to the Maf family. YhdE subfamily. It depends on a divalent metal cation as a cofactor.

The protein localises to the cytoplasm. It carries out the reaction dTTP + H2O = dTMP + diphosphate + H(+). It catalyses the reaction UTP + H2O = UMP + diphosphate + H(+). Its function is as follows. Nucleoside triphosphate pyrophosphatase that hydrolyzes dTTP and UTP. May have a dual role in cell division arrest and in preventing the incorporation of modified nucleotides into cellular nucleic acids. This is dTTP/UTP pyrophosphatase from Flavobacterium psychrophilum (strain ATCC 49511 / DSM 21280 / CIP 103535 / JIP02/86).